We begin with the raw amino-acid sequence, 1255 residues long: Pre-mRNA-splicing factor ATP-dependent RNA helicase DEAH7 (1255 aa).

The segment at 1-316 is disordered; that stretch reads MGVDPFKTTE…SDEDRSQGAE (316 aa). Positions 13–60 are enriched in basic and acidic residues; it reads EADKETNGGVPVKDKLTFKAPERKSRLGLDARAIEKKDNAKTEGEFKV. Positions 109-137 are enriched in polar residues; sequence AQESTVTTENAGTSDISITPRTLSCTSSY. 2 short sequence motifs (nuclear localization signal) span residues 144-153 and 172-191; these read RHREEHRRDR and RRRESYRQSDRDYHGEKRRR. Residues 144–219 show a composition bias toward basic and acidic residues; sequence RHREEHRRDR…EWERSPHGDR (76 aa). Low complexity-rich tracts occupy residues 220–240 and 271–290; these read GSSYSRRPQPSPSPMLAAASP and PIRASGSSIRSSSSRYGGRS. Basic and acidic residues predominate over residues 297-316; the sequence is REGDLTNEGHSDEDRSQGAE. The region spanning 568–731 is the Helicase ATP-binding domain; sequence LQVIRENQVI…FGSVPIFNIP (164 aa). 581-588 contributes to the ATP binding site; it reads GETGSGKT. Residues 678-681 carry the DEAH box motif; it reads DEAH. One can recognise a Helicase C-terminal domain in the interval 753-933; the sequence is AVKQAMTIHI…NVVLLLKSLK (181 aa). Over residues 1190 to 1224 the composition is skewed to basic and acidic residues; that stretch reads LEHKKKQKEEKSGMEEEMEKLRRDQVESELRSKER. Positions 1190-1255 are disordered; the sequence is LEHKKKQKEE…TFLRPKKLGL (66 aa).

It belongs to the DEAD box helicase family. DEAH subfamily. PRP16 sub-subfamily. Interacts with the Phytophthora PSR1 protein.

The protein resides in the nucleus. The catalysed reaction is ATP + H2O = ADP + phosphate + H(+). Involved in pre-mRNA splicing by mediating structural transitions of the spliceosome during the catalytic step. Facilitates expression of genes involved in auxin-mediated development including male-gametophyte transmission, apical-basal patterning of embryonic and gynoecium development, stamen development, phyllotactic flower positioning, and vascular development. Also involved in root-meristem maintenance and planar polarity of root-hair positioning. Acts as a component of RNA silencing that regulates distinct classes of endogenous small RNAs. Functions as a positive regulator of plant immunity. The polypeptide is Pre-mRNA-splicing factor ATP-dependent RNA helicase DEAH7 (Arabidopsis thaliana (Mouse-ear cress)).